The following is a 166-amino-acid chain: Large ribosomal subunit protein uL10 (166 aa).

This sequence belongs to the universal ribosomal protein uL10 family. In terms of assembly, part of the ribosomal stalk of the 50S ribosomal subunit. The N-terminus interacts with L11 and the large rRNA to form the base of the stalk. The C-terminus forms an elongated spine to which L12 dimers bind in a sequential fashion forming a multimeric L10(L12)X complex.

In terms of biological role, forms part of the ribosomal stalk, playing a central role in the interaction of the ribosome with GTP-bound translation factors. This is Large ribosomal subunit protein uL10 from Staphylococcus carnosus (strain TM300).